The primary structure comprises 343 residues: UDP-3-O-acylglucosamine N-acyltransferase (343 aa).

Catalysis depends on His-239, which acts as the Proton acceptor.

The protein belongs to the transferase hexapeptide repeat family. LpxD subfamily. In terms of assembly, homotrimer.

The catalysed reaction is a UDP-3-O-[(3R)-3-hydroxyacyl]-alpha-D-glucosamine + a (3R)-hydroxyacyl-[ACP] = a UDP-2-N,3-O-bis[(3R)-3-hydroxyacyl]-alpha-D-glucosamine + holo-[ACP] + H(+). The protein operates within bacterial outer membrane biogenesis; LPS lipid A biosynthesis. Functionally, catalyzes the N-acylation of UDP-3-O-acylglucosamine using 3-hydroxyacyl-ACP as the acyl donor. Is involved in the biosynthesis of lipid A, a phosphorylated glycolipid that anchors the lipopolysaccharide to the outer membrane of the cell. The polypeptide is UDP-3-O-acylglucosamine N-acyltransferase (Vibrio vulnificus (strain YJ016)).